We begin with the raw amino-acid sequence, 365 residues long: Putative F-box/kelch-repeat protein At4g39290 (365 aa).

The region spanning 10–58 (QMTFSMLPDDLVLNCLARVSKVYYPSLSFVSKKFRSLIASTELQELRSF) is the F-box domain. 2 Kelch repeats span residues 118–165 (DIYA…CVLN) and 167–213 (KIYV…KIVG).

The protein is Putative F-box/kelch-repeat protein At4g39290 of Arabidopsis thaliana (Mouse-ear cress).